Reading from the N-terminus, the 355-residue chain is UDP-N-acetylglucosamine--N-acetylmuramyl-(pentapeptide) pyrophosphoryl-undecaprenol N-acetylglucosamine transferase (355 aa).

UDP-N-acetyl-alpha-D-glucosamine is bound by residues 15–17 (TGG), asparagine 127, arginine 163, serine 191, isoleucine 244, 263–268 (ALTVSE), and glutamine 288.

This sequence belongs to the glycosyltransferase 28 family. MurG subfamily.

The protein resides in the cell inner membrane. The catalysed reaction is di-trans,octa-cis-undecaprenyl diphospho-N-acetyl-alpha-D-muramoyl-L-alanyl-D-glutamyl-meso-2,6-diaminopimeloyl-D-alanyl-D-alanine + UDP-N-acetyl-alpha-D-glucosamine = di-trans,octa-cis-undecaprenyl diphospho-[N-acetyl-alpha-D-glucosaminyl-(1-&gt;4)]-N-acetyl-alpha-D-muramoyl-L-alanyl-D-glutamyl-meso-2,6-diaminopimeloyl-D-alanyl-D-alanine + UDP + H(+). Its pathway is cell wall biogenesis; peptidoglycan biosynthesis. Its function is as follows. Cell wall formation. Catalyzes the transfer of a GlcNAc subunit on undecaprenyl-pyrophosphoryl-MurNAc-pentapeptide (lipid intermediate I) to form undecaprenyl-pyrophosphoryl-MurNAc-(pentapeptide)GlcNAc (lipid intermediate II). The protein is UDP-N-acetylglucosamine--N-acetylmuramyl-(pentapeptide) pyrophosphoryl-undecaprenol N-acetylglucosamine transferase of Escherichia coli (strain 55989 / EAEC).